The following is a 314-amino-acid chain: MIRTLYWENNRLFLLDQTKLPHTIEYVECRTYTDVIDGIKTMKVRGAPAIGVSAAYGMALGELAGEDMDVIGDEIKSARPTAVNLFWAVDKVLDLVSRGKSAVDVAIEMEKDDVAINKKIGEYGNSIIDDNDTILTHCNAGALACAGYGTALGVIRAAHEANKNIDVICDETRPVLQGARLSVFEMQQENIPVRLIVDGAAGHMMQKGEVDKVIIGADRVAKDGVANKIGSLMVALAAKRYDIPFYVAAPMSTFDFENNIFDTIIEQRLPEEVLCINGKYISKKQTNVENPAFDIVESDLITGIITEEGIKKPL.

Substrate contacts are provided by residues 45-47 (RGA), arginine 79, and glutamine 177. Aspartate 218 (proton donor) is an active-site residue. 227–228 (NK) serves as a coordination point for substrate.

The protein belongs to the eIF-2B alpha/beta/delta subunits family. MtnA subfamily.

It carries out the reaction 5-(methylsulfanyl)-alpha-D-ribose 1-phosphate = 5-(methylsulfanyl)-D-ribulose 1-phosphate. In terms of biological role, catalyzes the interconversion of methylthioribose-1-phosphate (MTR-1-P) into methylthioribulose-1-phosphate (MTRu-1-P). This Methanosphaera stadtmanae (strain ATCC 43021 / DSM 3091 / JCM 11832 / MCB-3) protein is Putative methylthioribose-1-phosphate isomerase.